The following is a 119-amino-acid chain: MIQKNTLLEVADNSGAREVLCIGLLGGRKSASIGDTIVVSTKSVNPKGKVEKGKVYRAVVVRVKNCIRKSDNSVIRFSSNAVVLVNNQGEPLGTRVFGPVKKLPSGSFMKIMSLAVEVL.

Belongs to the universal ribosomal protein uL14 family. As to quaternary structure, part of the 50S ribosomal subunit. Forms a cluster with proteins L3 and L19. In the 70S ribosome, L14 and L19 interact and together make contacts with the 16S rRNA in bridges B5 and B8.

Functionally, binds to 23S rRNA. Forms part of two intersubunit bridges in the 70S ribosome. This Wolbachia sp. subsp. Brugia malayi (strain TRS) protein is Large ribosomal subunit protein uL14.